The following is a 526-amino-acid chain: Bifunctional purine biosynthesis protein PurH (526 aa).

Residues 1–145 (MSKAPLALLS…KNHAHVGIVT (145 aa)) enclose the MGS-like domain.

This sequence belongs to the PurH family.

The enzyme catalyses (6R)-10-formyltetrahydrofolate + 5-amino-1-(5-phospho-beta-D-ribosyl)imidazole-4-carboxamide = 5-formamido-1-(5-phospho-D-ribosyl)imidazole-4-carboxamide + (6S)-5,6,7,8-tetrahydrofolate. It carries out the reaction IMP + H2O = 5-formamido-1-(5-phospho-D-ribosyl)imidazole-4-carboxamide. Its pathway is purine metabolism; IMP biosynthesis via de novo pathway; 5-formamido-1-(5-phospho-D-ribosyl)imidazole-4-carboxamide from 5-amino-1-(5-phospho-D-ribosyl)imidazole-4-carboxamide (10-formyl THF route): step 1/1. The protein operates within purine metabolism; IMP biosynthesis via de novo pathway; IMP from 5-formamido-1-(5-phospho-D-ribosyl)imidazole-4-carboxamide: step 1/1. The chain is Bifunctional purine biosynthesis protein PurH from Psychrobacter cryohalolentis (strain ATCC BAA-1226 / DSM 17306 / VKM B-2378 / K5).